Here is a 181-residue protein sequence, read N- to C-terminus: Large ribosomal subunit protein uL5 (181 aa).

The protein belongs to the universal ribosomal protein uL5 family. Part of the 50S ribosomal subunit; part of the 5S rRNA/L5/L18/L25 subcomplex. Contacts the 5S rRNA and the P site tRNA. Forms a bridge to the 30S subunit in the 70S ribosome.

Functionally, this is one of the proteins that bind and probably mediate the attachment of the 5S RNA into the large ribosomal subunit, where it forms part of the central protuberance. In the 70S ribosome it contacts protein S13 of the 30S subunit (bridge B1b), connecting the 2 subunits; this bridge is implicated in subunit movement. Contacts the P site tRNA; the 5S rRNA and some of its associated proteins might help stabilize positioning of ribosome-bound tRNAs. In Mycoplasmopsis pulmonis (strain UAB CTIP) (Mycoplasma pulmonis), this protein is Large ribosomal subunit protein uL5.